We begin with the raw amino-acid sequence, 451 residues long: Alpha-galactosidase (451 aa).

Residue 5–71 coordinates NAD(+); it reads PKITFIGAGS…ASGRITCHTN (67 aa). Asparagine 151 is a binding site for substrate. Cysteine 173 serves as a coordination point for Mn(2+). Histidine 174 (proton donor) is an active-site residue. Histidine 203 provides a ligand contact to Mn(2+). Substrate is bound at residue arginine 287.

It belongs to the glycosyl hydrolase 4 family. Homodimer. Mn(2+) is required as a cofactor. Requires NAD(+) as cofactor.

It catalyses the reaction Hydrolysis of terminal, non-reducing alpha-D-galactose residues in alpha-D-galactosides, including galactose oligosaccharides, galactomannans and galactolipids.. This is Alpha-galactosidase (melA) from Salmonella typhimurium (strain LT2 / SGSC1412 / ATCC 700720).